Consider the following 235-residue polypeptide: Glucosamine-6-phosphate deaminase (235 aa).

D62 acts as the Proton acceptor; for enolization step in catalysis. The For ring-opening step role is filled by N128. Residue H130 is the Proton acceptor; for ring-opening step of the active site. E135 functions as the For ring-opening step in the catalytic mechanism.

It belongs to the glucosamine/galactosamine-6-phosphate isomerase family. NagB subfamily.

It carries out the reaction alpha-D-glucosamine 6-phosphate + H2O = beta-D-fructose 6-phosphate + NH4(+). The protein operates within amino-sugar metabolism; N-acetylneuraminate degradation; D-fructose 6-phosphate from N-acetylneuraminate: step 5/5. Catalyzes the reversible isomerization-deamination of glucosamine 6-phosphate (GlcN6P) to form fructose 6-phosphate (Fru6P) and ammonium ion. The protein is Glucosamine-6-phosphate deaminase of Latilactobacillus sakei subsp. sakei (strain 23K) (Lactobacillus sakei subsp. sakei).